We begin with the raw amino-acid sequence, 118 residues long: Cycloviolacin-O11 (118 aa).

The first 22 residues, 1 to 22 (MEMKNMVVGLFLIAAFALPALA), serve as a signal peptide directing secretion. A propeptide spanning residues 23-84 (TSFEKDFITH…THSNSINALG (62 aa)) is cleaved from the precursor. Residues 85 to 115 (GTLPCGESCVWIPCISAVVGCSCKSKVCYKN) constitute a cross-link (cyclopeptide (Gly-Asn)). Cystine bridges form between Cys-89-Cys-105, Cys-93-Cys-107, and Cys-98-Cys-112. Residues 116–118 (SLA) constitute a propeptide that is removed on maturation.

In terms of processing, cycloviolacin-O11 is a cyclic peptide. As to expression, expressed in leaves, petals and petioles but not in roots and runners (at protein level).

Functionally, probably participates in a plant defense mechanism. In Viola odorata (Sweet violet), this protein is Cycloviolacin-O11 (Voc2).